Reading from the N-terminus, the 407-residue chain is 1-deoxy-D-xylulose 5-phosphate reductoisomerase (407 aa).

Residues Thr-10, Gly-11, Ser-12, Ile-13, Gly-36, and Asn-131 each contribute to the NADPH site. Residue Lys-132 participates in 1-deoxy-D-xylulose 5-phosphate binding. Glu-133 provides a ligand contact to NADPH. A Mn(2+)-binding site is contributed by Asp-155. 1-deoxy-D-xylulose 5-phosphate-binding residues include Ser-156, Glu-157, Ser-181, and His-204. Glu-157 provides a ligand contact to Mn(2+). Position 210 (Gly-210) interacts with NADPH. Residues Ser-217, Asn-222, Lys-223, and Glu-226 each contribute to the 1-deoxy-D-xylulose 5-phosphate site. Glu-226 contributes to the Mn(2+) binding site.

It belongs to the DXR family. Mg(2+) serves as cofactor. Requires Mn(2+) as cofactor.

It catalyses the reaction 2-C-methyl-D-erythritol 4-phosphate + NADP(+) = 1-deoxy-D-xylulose 5-phosphate + NADPH + H(+). The protein operates within isoprenoid biosynthesis; isopentenyl diphosphate biosynthesis via DXP pathway; isopentenyl diphosphate from 1-deoxy-D-xylulose 5-phosphate: step 1/6. Catalyzes the NADPH-dependent rearrangement and reduction of 1-deoxy-D-xylulose-5-phosphate (DXP) to 2-C-methyl-D-erythritol 4-phosphate (MEP). This chain is 1-deoxy-D-xylulose 5-phosphate reductoisomerase, found in Cutibacterium acnes (strain DSM 16379 / KPA171202) (Propionibacterium acnes).